A 72-amino-acid chain; its full sequence is Rubredoxin (72 aa).

One can recognise a Rubredoxin-like domain in the interval 19-72 (DAVLECKICWQRYDPAEGDPVWQIPPGTPFAALPAHWRCPRCDGDREQFMVVDG). Cys-24, Cys-27, Cys-57, and Cys-60 together coordinate Fe cation.

Belongs to the rubredoxin family. Fe(3+) serves as cofactor.

Rubredoxin is a small nonheme, iron protein lacking acid-labile sulfide. Its single Fe, chelated to 4 Cys, functions as an electron acceptor and may also stabilize the conformation of the molecule. Could be involved in hydrogenase-linked redox processes. The protein is Rubredoxin (hoxR) of Azotobacter vinelandii.